The chain runs to 290 residues: Nucleotide-binding protein FN1089 (290 aa).

11–18 (GLSGAGKT) serves as a coordination point for ATP. 56–59 (DIRT) contacts GTP.

The protein belongs to the RapZ-like family.

Its function is as follows. Displays ATPase and GTPase activities. This Fusobacterium nucleatum subsp. nucleatum (strain ATCC 25586 / DSM 15643 / BCRC 10681 / CIP 101130 / JCM 8532 / KCTC 2640 / LMG 13131 / VPI 4355) protein is Nucleotide-binding protein FN1089.